The following is a 314-amino-acid chain: Glycerol-3-phosphate dehydrogenase [NAD(P)+] (314 aa).

Positions 14, 15, 35, and 108 each coordinate NADPH. 2 residues coordinate sn-glycerol 3-phosphate: K108 and G136. A140 contributes to the NADPH binding site. Sn-glycerol 3-phosphate contacts are provided by K191, D247, S257, R258, and N259. The active-site Proton acceptor is the K191. R258 contributes to the NADPH binding site. NADPH-binding residues include L282 and E284.

It belongs to the NAD-dependent glycerol-3-phosphate dehydrogenase family.

Its subcellular location is the cytoplasm. It catalyses the reaction sn-glycerol 3-phosphate + NAD(+) = dihydroxyacetone phosphate + NADH + H(+). The catalysed reaction is sn-glycerol 3-phosphate + NADP(+) = dihydroxyacetone phosphate + NADPH + H(+). The protein operates within membrane lipid metabolism; glycerophospholipid metabolism. Its function is as follows. Catalyzes the reduction of the glycolytic intermediate dihydroxyacetone phosphate (DHAP) to sn-glycerol 3-phosphate (G3P), the key precursor for phospholipid synthesis. This is Glycerol-3-phosphate dehydrogenase [NAD(P)+] from Rickettsia bellii (strain OSU 85-389).